Reading from the N-terminus, the 475-residue chain is V-type ATP synthase beta chain (475 aa).

It belongs to the ATPase alpha/beta chains family.

In terms of biological role, produces ATP from ADP in the presence of a proton gradient across the membrane. The V-type beta chain is a regulatory subunit. This chain is V-type ATP synthase beta chain, found in Anaeromyxobacter dehalogenans (strain 2CP-C).